Reading from the N-terminus, the 592-residue chain is ATP-dependent RNA helicase DBP3 (592 aa).

The interval 1-146 (MGKRPIEDDA…AGSYTEHTEL (146 aa)) is disordered. Residues 19 to 31 (KKSKKEKSGKSKK) show a composition bias toward basic residues. A compositionally biased stretch (basic and acidic residues) spans 73-82 (EAKEASKAGK). The segment covering 97-108 (AARKAARKAEKK) has biased composition (basic residues). Positions 116–141 (TASSAPTEASSVPAQTLSSSNAGSYT) are enriched in polar residues. The Q motif signature appears at 179–206 (VNFKYLPVTDESQRAPFAGFTAPTPIQA). Residues 209-382 (WPFLLSGRDM…STFMVSPVRI (174 aa)) form the Helicase ATP-binding domain. 222-229 (AETGSGKT) is a binding site for ATP. The DEAD box signature appears at 330–333 (DEAD). In terms of domain architecture, Helicase C-terminal spans 413 to 562 (RLLQLLKQYQ…EVPEELLKFG (150 aa)).

It belongs to the DEAD box helicase family. DDX5/DBP2 subfamily.

Its subcellular location is the nucleus. It localises to the nucleolus. The enzyme catalyses ATP + H2O = ADP + phosphate + H(+). In terms of biological role, ATP-dependent RNA helicase required for 60S ribosomal subunit synthesis. Involved in efficient pre-rRNA processing, predominantly at site A3, which is necessary for the normal formation of 25S and 5.8S rRNAs. The protein is ATP-dependent RNA helicase DBP3 (DBP3) of Phaeosphaeria nodorum (strain SN15 / ATCC MYA-4574 / FGSC 10173) (Glume blotch fungus).